The primary structure comprises 830 residues: Penicillin-binding protein 1A (830 aa).

Residues 1 to 18 (MGKKKKKRKSSAFKIILN) lie on the Cytoplasmic side of the membrane. Residues 19 to 39 (VFLSIFLVAGVAFGGIVFAMI) traverse the membrane as a helical; Signal-anchor for type II membrane protein segment. Over 40 to 830 (KTAPPLNVQQ…QNHEDNKNKQ (791 aa)) the chain is Extracellular. A transglycosylase region spans residues 57–229 (SILYDDKGQY…PSVYYPYSSA (173 aa)). The Proton donor; for transglycosylase activity role is filled by E96. Positions 357 to 641 (ASAVIMDYHN…AARLWGDIMK (285 aa)) are transpeptidase. Residue S398 is the Acyl-ester intermediate; for transpeptidase activity of the active site. The segment at 754–830 (GGSLPPTEEK…QNHEDNKNKQ (77 aa)) is disordered. The segment covering 760–786 (TEEKNNSNTRDKNKDKNKNKNKDKNPS) has biased composition (basic and acidic residues). Positions 787-820 (QDKPNNNNNDNNSNNNNNNNDNNNNTKPPENDSN) are enriched in low complexity. Residues 821–830 (QNHEDNKNKQ) show a composition bias toward basic and acidic residues.

The protein in the N-terminal section; belongs to the glycosyltransferase 51 family. In the C-terminal section; belongs to the transpeptidase family.

Its subcellular location is the cell membrane. It carries out the reaction [GlcNAc-(1-&gt;4)-Mur2Ac(oyl-L-Ala-gamma-D-Glu-L-Lys-D-Ala-D-Ala)](n)-di-trans,octa-cis-undecaprenyl diphosphate + beta-D-GlcNAc-(1-&gt;4)-Mur2Ac(oyl-L-Ala-gamma-D-Glu-L-Lys-D-Ala-D-Ala)-di-trans,octa-cis-undecaprenyl diphosphate = [GlcNAc-(1-&gt;4)-Mur2Ac(oyl-L-Ala-gamma-D-Glu-L-Lys-D-Ala-D-Ala)](n+1)-di-trans,octa-cis-undecaprenyl diphosphate + di-trans,octa-cis-undecaprenyl diphosphate + H(+). It catalyses the reaction Preferential cleavage: (Ac)2-L-Lys-D-Ala-|-D-Ala. Also transpeptidation of peptidyl-alanyl moieties that are N-acyl substituents of D-alanine.. The protein operates within cell wall biogenesis; peptidoglycan biosynthesis. Functionally, cell wall formation. Synthesis of cross-linked peptidoglycan from the lipid intermediates. The enzyme has a penicillin-insensitive transglycosylase N-terminal domain (formation of linear glycan strands) and a penicillin-sensitive transpeptidase C-terminal domain (cross-linking of the peptide subunits). The chain is Penicillin-binding protein 1A (pbpA) from Clostridium botulinum (strain Hall / ATCC 3502 / NCTC 13319 / Type A).